Reading from the N-terminus, the 267-residue chain is Tryptophan synthase alpha chain (267 aa).

Active-site proton acceptor residues include Glu47 and Asp58.

Belongs to the TrpA family. In terms of assembly, tetramer of two alpha and two beta chains.

The enzyme catalyses (1S,2R)-1-C-(indol-3-yl)glycerol 3-phosphate + L-serine = D-glyceraldehyde 3-phosphate + L-tryptophan + H2O. It functions in the pathway amino-acid biosynthesis; L-tryptophan biosynthesis; L-tryptophan from chorismate: step 5/5. Functionally, the alpha subunit is responsible for the aldol cleavage of indoleglycerol phosphate to indole and glyceraldehyde 3-phosphate. The chain is Tryptophan synthase alpha chain from Chlorobium phaeobacteroides (strain DSM 266 / SMG 266 / 2430).